We begin with the raw amino-acid sequence, 178 residues long: Large ribosomal subunit protein uL6 (178 aa).

Belongs to the universal ribosomal protein uL6 family. Part of the 50S ribosomal subunit.

Functionally, this protein binds to the 23S rRNA, and is important in its secondary structure. It is located near the subunit interface in the base of the L7/L12 stalk, and near the tRNA binding site of the peptidyltransferase center. The sequence is that of Large ribosomal subunit protein uL6 from Corynebacterium jeikeium (strain K411).